Here is a 219-residue protein sequence, read N- to C-terminus: Ras-related protein Rab-32A (219 aa).

22 to 29 contacts GTP; that stretch reads GDIGTGKT. The Effector region motif lies at 44–52; sequence YKSTIGVDF. GTP is bound by residues 71–75 and 134–137; these read DIAGQ and NKCD. Residues 192 to 219 are disordered; it reads NQPIEGTIQPGDLNKQPQPTSTGPSCCK. A compositionally biased stretch (polar residues) spans 206 to 219; sequence KQPQPTSTGPSCCK. 2 S-geranylgeranyl cysteine lipidation sites follow: cysteine 217 and cysteine 218.

It belongs to the small GTPase superfamily. Rab family.

This Dictyostelium discoideum (Social amoeba) protein is Ras-related protein Rab-32A (rab32A).